The following is a 309-amino-acid chain: Acetolactate synthase small subunit, mitochondrial (309 aa).

Residues 1-24 (MLRSLLQSGHRRVVASSCATMVRC) constitute a mitochondrion transit peptide. The ACT domain occupies 79–159 (VLNCLVQNEP…DYTNSEIIKR (81 aa)).

It belongs to the acetolactate synthase small subunit family. The acetolactate synthase complex contains the catalytic regulatory subunit ILV2 and the regulatory small subunit ILV6.

Its subcellular location is the mitochondrion. It participates in amino-acid biosynthesis; L-isoleucine biosynthesis; L-isoleucine from 2-oxobutanoate: step 1/4. It functions in the pathway amino-acid biosynthesis; L-valine biosynthesis; L-valine from pyruvate: step 1/4. Its function is as follows. Regulatory subunit of mitochondrial acetolactate synthase, which catalyzes the first of a series of common steps in the biosynthesis of the branched-chain amino acids. Stimulates activity of the acetolactate synthase catalytic subunit ILV2 seven- to tenfold and confers sensitivity to inhibition by valine and activation by ATP. This is Acetolactate synthase small subunit, mitochondrial (ILV6) from Saccharomyces cerevisiae (strain ATCC 204508 / S288c) (Baker's yeast).